The following is a 468-amino-acid chain: Probable acid phosphatase DIA3 (468 aa).

Residues 1–20 form the signal peptide; that stretch reads MVKPVIFAICLGVLLSKALS. The active-site Nucleophile is the His76. Asn98, Asn163, Asn193, Asn202, Asn238, Asn251, and Asn316 each carry an N-linked (GlcNAc...) asparagine glycan. The active-site Proton donor is the Asp339. N-linked (GlcNAc...) asparagine glycosylation is found at Asn357, Asn391, Asn457, and Asn462.

It belongs to the histidine acid phosphatase family.

The catalysed reaction is a phosphate monoester + H2O = an alcohol + phosphate. The polypeptide is Probable acid phosphatase DIA3 (DIA3) (Saccharomyces cerevisiae (strain ATCC 204508 / S288c) (Baker's yeast)).